We begin with the raw amino-acid sequence, 345 residues long: tRNA N6-adenosine threonylcarbamoyltransferase (345 aa).

Positions 113 and 117 each coordinate Fe cation. Residues 142-146, D175, G188, D192, and N282 each bind substrate; that span reads AISGG. D310 is a binding site for Fe cation.

This sequence belongs to the KAE1 / TsaD family. Fe(2+) is required as a cofactor.

The protein localises to the cytoplasm. It carries out the reaction L-threonylcarbamoyladenylate + adenosine(37) in tRNA = N(6)-L-threonylcarbamoyladenosine(37) in tRNA + AMP + H(+). Required for the formation of a threonylcarbamoyl group on adenosine at position 37 (t(6)A37) in tRNAs that read codons beginning with adenine. Is involved in the transfer of the threonylcarbamoyl moiety of threonylcarbamoyl-AMP (TC-AMP) to the N6 group of A37, together with TsaE and TsaB. TsaD likely plays a direct catalytic role in this reaction. This Bdellovibrio bacteriovorus (strain ATCC 15356 / DSM 50701 / NCIMB 9529 / HD100) protein is tRNA N6-adenosine threonylcarbamoyltransferase.